Here is a 1111-residue protein sequence, read N- to C-terminus: Phytochrome C (1111 aa).

In terms of domain architecture, GAF spans 213–393 (NMLLLCDALV…VFGVQINKEA (181 aa)). C318 provides a ligand contact to phytochromobilin. 2 PAS domains span residues 604–674 (IVNE…LEGS) and 737–808 (DYAR…TKLR). A Histidine kinase domain is found at 889-1111 (YLRHEVKDPE…FVILTEFPLI (223 aa)).

This sequence belongs to the phytochrome family. Homodimer. Contains one covalently linked phytochromobilin chromophore.

Regulatory photoreceptor which exists in two forms that are reversibly interconvertible by light: the Pr form that absorbs maximally in the red region of the spectrum and the Pfr form that absorbs maximally in the far-red region. Photoconversion of Pr to Pfr induces an array of morphogenic responses, whereas reconversion of Pfr to Pr cancels the induction of those responses. Pfr controls the expression of a number of nuclear genes including those encoding the small subunit of ribulose-bisphosphate carboxylase, chlorophyll A/B binding protein, protochlorophyllide reductase, rRNA, etc. It also controls the expression of its own gene(s) in a negative feedback fashion. The sequence is that of Phytochrome C (PHYC) from Arabidopsis thaliana (Mouse-ear cress).